The following is a 321-amino-acid chain: Cytochrome c biogenesis protein CcsA (321 aa).

8 helical membrane passes run 9–29 (ILTHISFSIISIVITIHLMTL), 44–64 (GIISTFFSITGLLITRWIYSG), 71–91 (LYESLIFLSWSFSIIHMIPYL), 98–118 (LSVITVPSVIFTQGFVTSCLS), 143–163 (MLLSYATLLCGSLLSVALLVI), 225–245 (IISLGFIFLTMGILSGAVWAN), 260–280 (WAFITWTIFAIYSHIRININF), and 288–308 (VASIGFLIIWICYFGINLLGI).

The protein belongs to the CcmF/CycK/Ccl1/NrfE/CcsA family. In terms of assembly, may interact with Ccs1.

The protein resides in the plastid. It localises to the chloroplast thylakoid membrane. Functionally, required during biogenesis of c-type cytochromes (cytochrome c6 and cytochrome f) at the step of heme attachment. This Dioscorea elephantipes (Elephant's foot yam) protein is Cytochrome c biogenesis protein CcsA.